The sequence spans 272 residues: uncharacterized protein (272 aa).

The active site involves Glu-163.

This sequence belongs to the glycosyl hydrolase 25 family.

This is an uncharacterized protein from Escherichia coli O157:H7.